Consider the following 338-residue polypeptide: MVGTHPANLSELLDAVLKINEQTLDDNDSAKKQELQCHPMRQALFDVLCETKEKTVLTVRNQVDETPEDPQLMRLDNMLVAEGVAGPDKGGSLGSDASGGDQADYRQKLHQIRVLYNEELRKYEEACNEFTQHVRSLLKDQSQVRPIAHKEIERMVYIIQRKFNGIQVQLKQSTCEAVMILRSRFLDARRKRRNFSKQATEVLNEYFYGHLSNPYPSEEAKEDLARQCNITVSQVSNWFGNKRIRYKKNMAKAQEEASMYAAKKNAHVTLGGMAGNPYGMLPGAAAAAGLLNPYNPMNIPGQDTLHMGMPPFDLSVYNPQLMAAAQYQQQMDNADKNS.

The region spanning Thr4–Asp187 is the PBC domain. The tract at residues Glu11–Gly91 is PBC-A. The interval Gly94–Asp187 is PBC-B. Residues Ala188–Met250 constitute a DNA-binding region (homeobox; TALE-type).

Belongs to the TALE/PBX homeobox family. As to quaternary structure, interacts with Meis protein psa-3. Interacts with homeobox protein nob-1. As to expression, expressed in head dopaminergic neurons.

It localises to the nucleus. Transcription factor that binds to the 5'-TGATNNAT(G/T)(G/A)-3' PBC/Hox lineage enhancer region of sem-2 to promote cell fate specification in the postembryonic mesoderm (also known as the M lineage). Required for the M lineage-specific expression of the transcription factor, mls-2. Required for asymmetric division of the T hypodermal cell, probably acting via the regulation of asymmetric expression of Meis protein psa-3 in concert with homeobox protein nob-1 and the Wnt-MAPK pathway. Has a role in the mig-13 pathway to promote the guidance, migration and positioning of Q neuroblasts and their descendants along the anteroposterior body axis and the anterior migration of BDU interneurons. Also required for normal vulval formation. Plays a role in regulating gene expression in dopaminergic neurons, acting in midbody PDE neurons, and acting redundantly with ceh-40 in head neurons. May activate dopamine pathway genes in concert with ETS domain-containing protein ast-1, and homeobox proteins ceh-43 and ceh-40. This chain is Homeobox protein ceh-20, found in Caenorhabditis elegans.